The following is a 617-amino-acid chain: MDFSKLPKILDEDKESTFGYVHGVSGPVVTACDMAGAAMYELVRVGHSELVGEIIRLEGDMATIQVYEETSGVSVGDPVLRTGKPLSVELGPGIMGAIFDGIQRPLSDISSQTQSIYIPRGVNVSALSRDVKWEFTPSKNLRVGSHITGGDIYGIVNENSLIKHRIMLPPRNRGTVTYIAPPGNYDTSDVVLELEFEGVKEKFSMVQVWPVRQVRPVTEKLPANHPLLTGQRVLDALFPCVQGGTTAIPGAFGCGKTVISQSLSKYSNSDVIIYVGCGERVNEMSEVLRDFPELTMEVDGKVESIMKRTALVANTSNMPVAAREASIYTGITLSEYFRDMGYHVSMMANSTSRWAEALREISGRLAEMPADSGYPAYLGARLASFYERAGRVKCLGNPEREGSVTIVGAVSPPGGDFSDPVTSATLGIVQVFWGLDKKLAQRKHFPSVNWLISYSKYMRALDEYYDKHFTEFVPLRTKAKEILQEEEDLAEIVQLVGKASLAETDKITLEVAKLIKDDFLQQNGYTPYDRFCPFYKTVGMLSNMIAFYDLARRAVETTAQSDNKITWSIIREHMGEILYKLSSMKFKDPVKDGEAKIKADYAQLLEDVQNAFRSLED.

Threonine 136 is subject to Phosphothreonine. Residue glycine 250–threonine 257 participates in ATP binding. At serine 384 the chain carries Phosphoserine; by AMPK.

This sequence belongs to the ATPase alpha/beta chains family. In terms of assembly, V-ATPase is a heteromultimeric enzyme made up of two complexes: the ATP-hydrolytic V1 complex and the proton translocation V0 complex. The V1 complex consists of three catalytic AB heterodimers that form a heterohexamer, three peripheral stalks each consisting of EG heterodimers, one central rotor including subunits D and F, and the regulatory subunits C and H. The proton translocation complex V0 consists of the proton transport subunit a, a ring of proteolipid subunits c9c'', rotary subunit d, subunits e and f, and the accessory subunits ATP6AP1/Ac45 and ATP6AP2/PRR. Interacts with the V0 complex V-ATPase subunit a4 ATP6V0A4. Interacts with WFS1. Interacts with alpha-crystallin B chain/CRYAB and with MTOR, forming a ternary complex. Phosphorylation at Ser-384 by AMPK down-regulates its enzyme activity.

It localises to the cytoplasm. Its subcellular location is the cytosol. The protein resides in the cytoplasmic vesicle. It is found in the secretory vesicle. The protein localises to the clathrin-coated vesicle membrane. It localises to the lysosome. The catalysed reaction is ATP + H2O + 4 H(+)(in) = ADP + phosphate + 5 H(+)(out). ATP hydrolysis occurs at the interface between the nucleotide-binding domains of subunits A and B. ATP hydrolysis triggers a conformational change in the subunits D and F, which induces a shift of subunit d. The c-ring is subsequently rotated and results in a continuous proton translocation across the membrane. Catalytic subunit of the V1 complex of vacuolar(H+)-ATPase (V-ATPase), a multisubunit enzyme composed of a peripheral complex (V1) that hydrolyzes ATP and a membrane integral complex (V0) that translocates protons. V-ATPase is responsible for acidifying and maintaining the pH of intracellular compartments and in some cell types, is targeted to the plasma membrane, where it is responsible for acidifying the extracellular environment. In aerobic conditions, involved in intracellular iron homeostasis, thus triggering the activity of Fe(2+) prolyl hydroxylase (PHD) enzymes, and leading to HIF1A hydroxylation and subsequent proteasomal degradation. May play a role in neurite development and synaptic connectivity. This is V-type proton ATPase catalytic subunit A (ATP6V1A) from Sus scrofa (Pig).